The chain runs to 135 residues: Large ribosomal subunit protein uL16c (135 aa).

This sequence belongs to the universal ribosomal protein uL16 family. In terms of assembly, part of the 50S ribosomal subunit.

Its subcellular location is the plastid. The protein resides in the chloroplast. This Lactuca sativa (Garden lettuce) protein is Large ribosomal subunit protein uL16c.